The following is a 160-amino-acid chain: Small ribosomal subunit protein uS7 (160 aa).

Belongs to the universal ribosomal protein uS7 family. Part of the 30S ribosomal subunit. Contacts proteins S9 and S11.

Functionally, one of the primary rRNA binding proteins, it binds directly to 16S rRNA where it nucleates assembly of the head domain of the 30S subunit. Is located at the subunit interface close to the decoding center, probably blocks exit of the E-site tRNA. The protein is Small ribosomal subunit protein uS7 of Anaplasma phagocytophilum (strain HZ).